The sequence spans 85 residues: Large ribosomal subunit protein bL27 (85 aa).

The segment at 1-20 (MAHKKAGGSSRNGRDSEAKR) is disordered.

The protein belongs to the bacterial ribosomal protein bL27 family.

This is Large ribosomal subunit protein bL27 from Aeromonas salmonicida (strain A449).